The following is a 79-amino-acid chain: Small ribosomal subunit protein bS21 (79 aa).

The disordered stretch occupies residues 59–79; the sequence is RKKMQREGLLPMKPKPVVGVR.

The protein belongs to the bacterial ribosomal protein bS21 family.

The chain is Small ribosomal subunit protein bS21 from Methylocella silvestris (strain DSM 15510 / CIP 108128 / LMG 27833 / NCIMB 13906 / BL2).